The primary structure comprises 298 residues: MSTSVPVKKALSALLRDPGNSHCADCKAQLHPRWASWSLGVFICIKCAGIHRSLGTHISKVKSVDLDTWKEEHLVKLIQFKNNLRANSYYEATLADELKQRKITDTSSLQNFIKNKYEYKKWIGDLSSIEGLNDSTEPVLHKPSANHSLPASNARLDQSSNSLQKTQTQPPSHLLSTSRSNTSLLNLQVSSLSKTTSNTSVTSSATSIGAANTKTGNRVGEFGQRNDLKKSILSLYSKPSAQTQSQNSFFTSTTPQPCNTPSPFVNTGITATNNNSMNSNSSSNISLDDNELFKNVWS.

N-acetylserine is present on Ser-2. In terms of domain architecture, Arf-GAP spans 8-130; it reads KKALSALLRD…KWIGDLSSIE (123 aa). A C4-type zinc finger spans residues 23–47; it reads CADCKAQLHPRWASWSLGVFICIKC. Positions 137 to 180 are disordered; sequence EPVLHKPSANHSLPASNARLDQSSNSLQKTQTQPPSHLLSTSRS. Residues 145-171 are compositionally biased toward polar residues; that stretch reads ANHSLPASNARLDQSSNSLQKTQTQPP. A phosphoserine mark is found at Ser-180, Ser-183, and Ser-207.

The protein localises to the cytoplasm. Its subcellular location is the golgi apparatus. Functionally, GTPase-activating protein for the ADP ribosylation factor family. This chain is ADP-ribosylation factor GTPase-activating protein effector protein 2 (AGE2), found in Saccharomyces cerevisiae (strain ATCC 204508 / S288c) (Baker's yeast).